Reading from the N-terminus, the 341-residue chain is MASVASSTVFASSLPHHRATTRAPPTPPRIPRRARLPGRSVVSCLPKRGSEKLVVTRASDEEGPPEPAGQGRGGGRAWPSLDASSCGLALAAAAGVLMLQGSQQALAGTEFMGMQDVVGDLGDISTGFASAFLLIFFSELGDRTFFIAALLAARNSGAIIFLGTFGALAVMTIISVVLGRAFHYVDGIIPFSFGGTDFPVDDFLAACLLVYYGVTTLLDAASGDEEKMNEEQEEAELAVSKFLGNGAGIISAASTIASTFVLVFIAEWGDKSFFSTIALAAASSPLGVIAGSLAGHAVATLIAVLGGSLLGTFLSEKIVAYIGGSLFLAFAAVTLVEIVNS.

Residues 1 to 13 (MASVASSTVFASS) are compositionally biased toward low complexity. 2 disordered regions span residues 1–41 (MASV…GRSV) and 54–76 (VVTRASDEEGPPEPAGQGRGGGR). The N-terminal 57 residues, 1–57 (MASVASSTVFASSLPHHRATTRAPPTPPRIPRRARLPGRSVVSCLPKRGSEKLVVTR), are a transit peptide targeting the chloroplast. 7 helical membrane-spanning segments follow: residues 79–99 (PSLDASSCGLALAAAAGVLML), 117–137 (VVGDLGDISTGFASAFLLIFF), 158–178 (AIIFLGTFGALAVMTIISVVL), 203–223 (FLAACLLVYYGVTTLLDAASG), 246–266 (GAGIISAASTIASTFVLVFIA), 286–306 (LGVIAGSLAGHAVATLIAVLG), and 318–338 (IVAYIGGSLFLAFAAVTLVEI).

Belongs to the GDT1 family.

It is found in the plastid. It localises to the chloroplast membrane. This chain is GDT1-like protein 1, chloroplastic, found in Oryza sativa subsp. indica (Rice).